Here is a 290-residue protein sequence, read N- to C-terminus: 33 kDa chaperonin (290 aa).

2 cysteine pairs are disulfide-bonded: Cys235–Cys237 and Cys268–Cys271.

The protein belongs to the HSP33 family. Post-translationally, under oxidizing conditions two disulfide bonds are formed involving the reactive cysteines. Under reducing conditions zinc is bound to the reactive cysteines and the protein is inactive.

The protein localises to the cytoplasm. Its function is as follows. Redox regulated molecular chaperone. Protects both thermally unfolding and oxidatively damaged proteins from irreversible aggregation. Plays an important role in the bacterial defense system toward oxidative stress. This Streptococcus pyogenes serotype M2 (strain MGAS10270) protein is 33 kDa chaperonin.